The following is a 403-amino-acid chain: MSNVKKVVLAYSGGLDTSAIVPWLKENYGCEVVAFVADVGQGAEELEGVEEKAKASGASECHVVDLKDEFVKNYVYPTLKTGAIYEGTYLLGTAMARPIIAKAQVEVARKVGADALSHGCTGKGNDQVRFESCYAALAPDLQVIAPWREWELSSRESLLGYLAERNIPCSASATKIYSRDANAWHISHEGGELEDPWCEPTEKVWTMTASPEQAPDKPEYLCVTVENGEIVAVNNQALSPFECLSVLNDVAAKHGVGRVDIVENRLVGMKSRGCYETPGGTVMMAALQAIDELVLDKVSRSWKTQLSEQFAQLLYDGRWFTPLQQSVMAAAQSLCATASGEVVLKLYKGSVTAVQKRSPHSLYSEDFATFGADEVYNQAHAEGFIRLFSLPSRIAALQKQQKG.

ATP contacts are provided by residues Ala10–Ser18 and Ala37. Tyr89 contributes to the L-citrulline binding site. An ATP-binding site is contributed by Gly119. Thr121, Asn125, and Asp126 together coordinate L-aspartate. Asn125 lines the L-citrulline pocket. The L-citrulline site is built by Arg129, Ser178, Ser187, Glu263, and Tyr275.

Belongs to the argininosuccinate synthase family. Type 1 subfamily. As to quaternary structure, homotetramer.

The protein localises to the cytoplasm. The enzyme catalyses L-citrulline + L-aspartate + ATP = 2-(N(omega)-L-arginino)succinate + AMP + diphosphate + H(+). The protein operates within amino-acid biosynthesis; L-arginine biosynthesis; L-arginine from L-ornithine and carbamoyl phosphate: step 2/3. The polypeptide is Argininosuccinate synthase (Idiomarina loihiensis (strain ATCC BAA-735 / DSM 15497 / L2-TR)).